Here is a 69-residue protein sequence, read N- to C-terminus: Large ribosomal subunit protein uL29 (69 aa).

This sequence belongs to the universal ribosomal protein uL29 family.

This is Large ribosomal subunit protein uL29 from Treponema denticola (strain ATCC 35405 / DSM 14222 / CIP 103919 / JCM 8153 / KCTC 15104).